The primary structure comprises 459 residues: Bifunctional protein GlmU (459 aa).

Residues 1–229 form a pyrophosphorylase region; the sequence is MSNFAIILAA…FDESLGVNDR (229 aa). UDP-N-acetyl-alpha-D-glucosamine is bound by residues 8-11, Lys22, Gln72, and 77-78; these read LAAG and GT. Residue Asp102 participates in Mg(2+) binding. Residues Gly139, Glu154, Asn169, and Asn227 each contribute to the UDP-N-acetyl-alpha-D-glucosamine site. Mg(2+) is bound at residue Asn227. The linker stretch occupies residues 230 to 250; that stretch reads VALATAESVMRRRINHKHMVN. An N-acetyltransferase region spans residues 251 to 459; the sequence is GVSFVNPEAT…TRLPHHPKNQ (209 aa). 2 residues coordinate UDP-N-acetyl-alpha-D-glucosamine: Arg332 and Lys350. The active-site Proton acceptor is the His362. 2 residues coordinate UDP-N-acetyl-alpha-D-glucosamine: Tyr365 and Asn376. Acetyl-CoA-binding positions include Ala379, 385–386, Ser404, Ala422, and Arg439; that span reads NY.

It in the N-terminal section; belongs to the N-acetylglucosamine-1-phosphate uridyltransferase family. The protein in the C-terminal section; belongs to the transferase hexapeptide repeat family. Homotrimer. The cofactor is Mg(2+).

The protein localises to the cytoplasm. The enzyme catalyses alpha-D-glucosamine 1-phosphate + acetyl-CoA = N-acetyl-alpha-D-glucosamine 1-phosphate + CoA + H(+). It carries out the reaction N-acetyl-alpha-D-glucosamine 1-phosphate + UTP + H(+) = UDP-N-acetyl-alpha-D-glucosamine + diphosphate. It functions in the pathway nucleotide-sugar biosynthesis; UDP-N-acetyl-alpha-D-glucosamine biosynthesis; N-acetyl-alpha-D-glucosamine 1-phosphate from alpha-D-glucosamine 6-phosphate (route II): step 2/2. The protein operates within nucleotide-sugar biosynthesis; UDP-N-acetyl-alpha-D-glucosamine biosynthesis; UDP-N-acetyl-alpha-D-glucosamine from N-acetyl-alpha-D-glucosamine 1-phosphate: step 1/1. Its pathway is bacterial outer membrane biogenesis; LPS lipid A biosynthesis. Catalyzes the last two sequential reactions in the de novo biosynthetic pathway for UDP-N-acetylglucosamine (UDP-GlcNAc). The C-terminal domain catalyzes the transfer of acetyl group from acetyl coenzyme A to glucosamine-1-phosphate (GlcN-1-P) to produce N-acetylglucosamine-1-phosphate (GlcNAc-1-P), which is converted into UDP-GlcNAc by the transfer of uridine 5-monophosphate (from uridine 5-triphosphate), a reaction catalyzed by the N-terminal domain. In Streptococcus pneumoniae serotype 2 (strain D39 / NCTC 7466), this protein is Bifunctional protein GlmU.